The chain runs to 740 residues: Elongation factor 2 (740 aa).

The tr-type G domain maps to 23–264; the sequence is AQIRNAGTLA…MIIEHVPPPN (242 aa). GTP-binding positions include 32–39, 98–102, and 152–155; these read AHVDHGKT, DTPGH, and NKID. A Diphthamide modification is found at H605.

The protein belongs to the TRAFAC class translation factor GTPase superfamily. Classic translation factor GTPase family. EF-G/EF-2 subfamily.

It localises to the cytoplasm. Catalyzes the GTP-dependent ribosomal translocation step during translation elongation. During this step, the ribosome changes from the pre-translocational (PRE) to the post-translocational (POST) state as the newly formed A-site-bound peptidyl-tRNA and P-site-bound deacylated tRNA move to the P and E sites, respectively. Catalyzes the coordinated movement of the two tRNA molecules, the mRNA and conformational changes in the ribosome. This Pyrobaculum arsenaticum (strain DSM 13514 / JCM 11321 / PZ6) protein is Elongation factor 2.